We begin with the raw amino-acid sequence, 215 residues long: Peptide methionine sulfoxide reductase MsrA (215 aa).

Residue Cys-58 is part of the active site.

This sequence belongs to the MsrA Met sulfoxide reductase family.

It carries out the reaction L-methionyl-[protein] + [thioredoxin]-disulfide + H2O = L-methionyl-(S)-S-oxide-[protein] + [thioredoxin]-dithiol. The enzyme catalyses [thioredoxin]-disulfide + L-methionine + H2O = L-methionine (S)-S-oxide + [thioredoxin]-dithiol. In terms of biological role, has an important function as a repair enzyme for proteins that have been inactivated by oxidation. Catalyzes the reversible oxidation-reduction of methionine sulfoxide in proteins to methionine. In Pseudomonas syringae pv. tomato (strain ATCC BAA-871 / DC3000), this protein is Peptide methionine sulfoxide reductase MsrA.